The chain runs to 184 residues: Endothelial cell-specific molecule 1 (184 aa).

The first 21 residues, methionine 1 to serine 21, serve as a signal peptide directing secretion. The 79-residue stretch at tyrosine 24–cysteine 102 folds into the IGFBP N-terminal domain. Cystine bridges form between cysteine 28–cysteine 51, cysteine 32–cysteine 53, cysteine 37–cysteine 54, cysteine 43–cysteine 57, cysteine 65–cysteine 83, and cysteine 77–cysteine 99. A disordered region spans residues arginine 145 to arginine 184. Residues histidine 150–isoleucine 167 show a composition bias toward basic and acidic residues. Residue serine 157 is glycosylated (O-linked (Xyl...) (chondroitin sulfate) serine).

In terms of processing, O-glycosylated; contains chondroitin sulfate and dermatan sulfate.

It is found in the secreted. Functionally, involved in angiogenesis; promotes angiogenic sprouting. May have potent implications in lung endothelial cell-leukocyte interactions. This is Endothelial cell-specific molecule 1 (Esm1) from Mus musculus (Mouse).